The following is a 360-amino-acid chain: Aurora kinase B (360 aa).

The Protein kinase domain maps to 93–343; the sequence is FDIGRPLGKG…LKGVMEHPWV (251 aa). Residues 99 to 107 and Lys-122 contribute to the ATP site; that span reads LGKGKFGNV. Residue Asp-216 is the Proton acceptor of the active site.

The protein belongs to the protein kinase superfamily. Ser/Thr protein kinase family. Aurora subfamily. Component of the chromosomal passenger complex (CPC).

The protein resides in the nucleus. The protein localises to the chromosome. It is found in the centromere. Its subcellular location is the cytoplasm. It localises to the cytoskeleton. The protein resides in the spindle. The protein localises to the midbody. The enzyme catalyses L-seryl-[protein] + ATP = O-phospho-L-seryl-[protein] + ADP + H(+). It catalyses the reaction L-threonyl-[protein] + ATP = O-phospho-L-threonyl-[protein] + ADP + H(+). Kinase activity is stimulated by cell-cycle specific phosphorylation. Functionally, serine/threonine-protein kinase component of the chromosomal passenger complex (CPC), a complex that acts as a key regulator of mitosis. The CPC complex has essential functions at the centromere in ensuring correct chromosome alignment and segregation and is required for chromatin-induced microtubule stabilization and spindle assembly. Involved in the bipolar attachment of spindle microtubules to kinetochores and is a key regulator for the onset of cytokinesis during mitosis. Required for central/midzone spindle assembly and cleavage furrow formation. Key component of the cytokinesis checkpoint, a process required to delay abscission to prevent both premature resolution of intercellular chromosome bridges and accumulation of DNA damage. Phosphorylates 'Ser-10' of histone H3 during mitosis. The sequence is that of Aurora kinase B from Xenopus tropicalis (Western clawed frog).